The primary structure comprises 443 residues: C4-dicarboxylate transport protein (443 aa).

A run of 9 helical transmembrane segments spans residues 17–37 (PFYS…ILLG), 57–77 (LVKM…IAGM), 92–112 (LYFL…ANVV), 139–159 (EQSI…GAFA), 161–181 (GDIL…AMVG), 201–221 (LVAI…AFTI), 234–254 (MLIG…LGAV), 320–340 (IYMT…LSWG), and 368–388 (AATL…ILGI).

The protein belongs to the dicarboxylate/amino acid:cation symporter (DAACS) (TC 2.A.23) family.

Its subcellular location is the cell inner membrane. Its function is as follows. Responsible for the transport of dicarboxylates such as succinate, fumarate, and malate from the periplasm across the membrane. The polypeptide is C4-dicarboxylate transport protein (Rhizobium leguminosarum bv. trifolii (strain WSM2304)).